The primary structure comprises 431 residues: CD44 antigen (431 aa).

Residues 1–22 form the signal peptide; that stretch reads MDKFWWHAAWGLCLLPLSLAQQ. At 23-338 the chain is on the extracellular side; sequence QIDLNITCRY…RPGRKPQIPE (316 aa). The N-linked (GlcNAc...) asparagine glycan is linked to N27. 3 disulfide bridges follow: C30–C131, C55–C120, and C79–C99. The Link domain maps to 34–122; it reads GVFHVEKNGR…TSHYDTYCFN (89 aa). A hyaluronan-binding site is contributed by R43. N59 carries an N-linked (GlcNAc...) asparagine glycan. Hyaluronan-binding residues include R80 and Y81. The N-linked (GlcNAc...) asparagine glycan is linked to N102. Hyaluronan is bound at residue Y107. N-linked (GlcNAc...) asparagine glycans are attached at residues N112 and N122. The span at 158–169 shows a compositional bias: basic and acidic residues; that stretch reads SKKGEYRTHQED. Disordered regions lie at residues 158 to 191 and 219 to 243; these read SKKG…KSTS and MATT…TTSL. N-linked (GlcNAc...) asparagine glycosylation is present at N174. Low complexity predominate over residues 181-191; sequence SSGSSSEKSTS. An O-linked (Xyl...) (chondroitin sulfate) serine glycan is attached at S182. The interval 226–338 is stem; sequence GKDGRRGGGL…RPGRKPQIPE (113 aa). Residues N256 and N325 are each glycosylated (N-linked (GlcNAc...) asparagine). A disordered region spans residues 279–333; sequence EDSNFNVDGSLPGDQDSSMDPRGNSLTVTDGSKLTGHSSGNQDSGANTTSRPGRK. Residues 302 to 329 show a composition bias toward polar residues; sequence NSLTVTDGSKLTGHSSGNQDSGANTTSR. A helical membrane pass occupies residues 339 to 359; it reads WLIVLASLLALALILAVCIAV. Residues 360 to 431 are Cytoplasmic-facing; sequence NSRRRCGQKK…LQNVDMKIGV (72 aa). Position 361 is a phosphoserine; by PKC (S361). Positions 362 to 380 are required for interaction with EZR, MSN and RDX and for co-localization to microvilli; the sequence is RRRCGQKKKLVINSGNGKV. 3 positions are modified to phosphoserine: S375, S386, and S395. Residues 376-396 form a disordered region; sequence GNGKVEDRKPSELNGEASKSQ.

As to quaternary structure, interacts with PKN2. Interacts with TIAM1 and TIAM2. Interacts with HA, as well as other glycosaminoglycans, collagen, laminin, and fibronectin via its N-terminal segment. Interacts with UNC119. Interacts with PDPN (via extracellular domain); this interaction is required for PDPN-mediated directional migration and regulation of lamellipodia extension/stabilization during cell spreading and migration. Interacts with RDX, EZR and MSN. Interacts with EGFR. Interacts with CD74; this complex is essential for the MIF-induced signaling cascade that results in B cell survival. Post-translationally, N-glycosylated. In terms of processing, O-glycosylated; contains chondroitin sulfate glycans which can be more or less sulfated. Phosphorylated; activation of PKC results in the dephosphorylation of Ser-395 (constitutive phosphorylation site), and the phosphorylation of Ser-361.

It is found in the cell membrane. The protein localises to the cell projection. It localises to the microvillus. Its subcellular location is the secreted. Cell-surface receptor that plays a role in cell-cell interactions, cell adhesion and migration, helping them to sense and respond to changes in the tissue microenvironment. Participates thereby in a wide variety of cellular functions including the activation, recirculation and homing of T-lymphocytes, hematopoiesis, inflammation and response to bacterial infection. Engages, through its ectodomain, extracellular matrix components such as hyaluronan/HA, collagen, growth factors, cytokines or proteases and serves as a platform for signal transduction by assembling, via its cytoplasmic domain, protein complexes containing receptor kinases and membrane proteases. Such effectors include PKN2, the RhoGTPases RAC1 and RHOA, Rho-kinases and phospholipase C that coordinate signaling pathways promoting calcium mobilization and actin-mediated cytoskeleton reorganization essential for cell migration and adhesion. This is CD44 antigen (CD44) from Mesocricetus auratus (Golden hamster).